Here is a 404-residue protein sequence, read N- to C-terminus: S-adenosylmethionine synthase (404 aa).

H18 lines the ATP pocket. D20 provides a ligand contact to Mg(2+). E46 provides a ligand contact to K(+). E59 and Q102 together coordinate L-methionine. The flexible loop stretch occupies residues 102–112; that stretch reads QSPEIAQGVDH. ATP contacts are provided by residues 178-180, 249-250, D258, 264-265, A281, and K285; these read DGK, KF, and RK. D258 is a binding site for L-methionine. An L-methionine-binding site is contributed by K289.

The protein belongs to the AdoMet synthase family. In terms of assembly, homotetramer; dimer of dimers. The cofactor is Mg(2+). K(+) serves as cofactor.

It is found in the cytoplasm. It catalyses the reaction L-methionine + ATP + H2O = S-adenosyl-L-methionine + phosphate + diphosphate. The protein operates within amino-acid biosynthesis; S-adenosyl-L-methionine biosynthesis; S-adenosyl-L-methionine from L-methionine: step 1/1. In terms of biological role, catalyzes the formation of S-adenosylmethionine (AdoMet) from methionine and ATP. The overall synthetic reaction is composed of two sequential steps, AdoMet formation and the subsequent tripolyphosphate hydrolysis which occurs prior to release of AdoMet from the enzyme. In Rhodococcus jostii (strain RHA1), this protein is S-adenosylmethionine synthase.